Here is a 316-residue protein sequence, read N- to C-terminus: 4-diphosphocytidyl-2-C-methyl-D-erythritol kinase (316 aa).

Lys23 is an active-site residue. Residue 108 to 118 (PVAGGMAGGSA) coordinates ATP. Asp150 is an active-site residue.

The protein belongs to the GHMP kinase family. IspE subfamily.

The catalysed reaction is 4-CDP-2-C-methyl-D-erythritol + ATP = 4-CDP-2-C-methyl-D-erythritol 2-phosphate + ADP + H(+). The protein operates within isoprenoid biosynthesis; isopentenyl diphosphate biosynthesis via DXP pathway; isopentenyl diphosphate from 1-deoxy-D-xylulose 5-phosphate: step 3/6. Its function is as follows. Catalyzes the phosphorylation of the position 2 hydroxy group of 4-diphosphocytidyl-2C-methyl-D-erythritol. This chain is 4-diphosphocytidyl-2-C-methyl-D-erythritol kinase, found in Mycobacterium avium (strain 104).